The primary structure comprises 82 residues: Translational regulator CsrA (82 aa).

The protein belongs to the CsrA/RsmA family. In terms of assembly, homodimer; the beta-strands of each monomer intercalate to form a hydrophobic core, while the alpha-helices form wings that extend away from the core.

The protein localises to the cytoplasm. Its function is as follows. A translational regulator that binds mRNA to regulate translation initiation and/or mRNA stability. Usually binds in the 5'-UTR at or near the Shine-Dalgarno sequence preventing ribosome-binding, thus repressing translation. Its main target seems to be the major flagellin gene, while its function is anatagonized by FliW. This Brachyspira hyodysenteriae (strain ATCC 49526 / WA1) protein is Translational regulator CsrA.